Consider the following 216-residue polypeptide: GTPase IMAP family member GIMD1 (216 aa).

Residues 5-216 (KMTINLALFG…ENCYQVLTFK (212 aa)) enclose the AIG1-type G domain. GTP-binding positions include 14-22 (GMTQSGKSS), S35, and 147-149 (HAE).

This sequence belongs to the TRAFAC class TrmE-Era-EngA-EngB-Septin-like GTPase superfamily. AIG1/Toc34/Toc159-like paraseptin GTPase family. IAN subfamily.

The polypeptide is GTPase IMAP family member GIMD1 (GIMD1) (Bos taurus (Bovine)).